The primary structure comprises 124 residues: Small ribosomal subunit protein uS12cz/uS12cy (124 aa).

The protein belongs to the universal ribosomal protein uS12 family. In terms of assembly, part of the 30S ribosomal subunit.

The protein resides in the plastid. It localises to the chloroplast. With S4 and S5 plays an important role in translational accuracy. Located at the interface of the 30S and 50S subunits. The polypeptide is Small ribosomal subunit protein uS12cz/uS12cy (rps12-A) (Agrostis stolonifera (Creeping bentgrass)).